Reading from the N-terminus, the 106-residue chain is Large ribosomal subunit protein bL21 (106 aa).

The protein belongs to the bacterial ribosomal protein bL21 family. Part of the 50S ribosomal subunit. Contacts protein L20.

Its function is as follows. This protein binds to 23S rRNA in the presence of protein L20. This Thermosipho africanus (strain TCF52B) protein is Large ribosomal subunit protein bL21.